Consider the following 439-residue polypeptide: MSDNIYSVSQLNSAARQMLEGNFSQIWLTGEISNFTQPVSGHWYLTLKDENAQVRCAMFRMKNLRVAFRPQNGMQVLVRANVSLYEPRGDYQLIIDSMHPAGEGLLQQQFEALKMKLAAEGLFAQNLKKTLPHFSKAVGIITSSTGAALQDILHILARRDPSLKVVIYPTAVQGKEATAEIVQMIELANARQEVDVLIVGRGGGSLEDLWCFNEEEVARAIFRSTLPIISAVGHETDVTIADFVADLRAPTPSAAAELVSRNQDELLQQLRHQQQRLDMAFDRLFTRKSQRLKQLALRLQNQHPQNQLRAQQAKNEQLTHRLQLAILRQFENTQQKFTALSVRLKQNPLPYRIQRYQQGLEQLKVRLNFCVNRQVTERQNKLATLCGKLDGLSPLKVLARGYSIAENPQGKAIVSVKDVNQGDFITTQVADGKIVSKVL.

This sequence belongs to the XseA family. As to quaternary structure, heterooligomer composed of large and small subunits.

The protein resides in the cytoplasm. It catalyses the reaction Exonucleolytic cleavage in either 5'- to 3'- or 3'- to 5'-direction to yield nucleoside 5'-phosphates.. Functionally, bidirectionally degrades single-stranded DNA into large acid-insoluble oligonucleotides, which are then degraded further into small acid-soluble oligonucleotides. The chain is Exodeoxyribonuclease 7 large subunit from Haemophilus influenzae (strain 86-028NP).